The sequence spans 64 residues: Large ribosomal subunit protein bL35 (64 aa).

The tract at residues 1-44 (MPKLKTNRGAAKRFKVKASGRISRARSNHSHILTKKDPKRKRRL) is disordered. Basic residues predominate over residues 10–44 (AAKRFKVKASGRISRARSNHSHILTKKDPKRKRRL).

It belongs to the bacterial ribosomal protein bL35 family.

The chain is Large ribosomal subunit protein bL35 from Halorhodospira halophila (strain DSM 244 / SL1) (Ectothiorhodospira halophila (strain DSM 244 / SL1)).